The sequence spans 257 residues: Alcohol dehydrogenase 1 (257 aa).

NAD(+) is bound at residue valine 9–leucine 33. Residue serine 137 participates in substrate binding. Tyrosine 150 functions as the Proton acceptor in the catalytic mechanism.

Belongs to the short-chain dehydrogenases/reductases (SDR) family. As to quaternary structure, homodimer.

The enzyme catalyses a primary alcohol + NAD(+) = an aldehyde + NADH + H(+). It catalyses the reaction a secondary alcohol + NAD(+) = a ketone + NADH + H(+). This is Alcohol dehydrogenase 1 (ADH1) from Ceratitis capitata (Mediterranean fruit fly).